Reading from the N-terminus, the 406-residue chain is Cysteine desulfurase (406 aa).

An N6-(pyridoxal phosphate)lysine modification is found at Lys-226. Cys-364 serves as the catalytic Cysteine persulfide intermediate.

Belongs to the class-V pyridoxal-phosphate-dependent aminotransferase family. Csd subfamily. In terms of assembly, homodimer. Interacts with SufE and the SufBCD complex composed of SufB, SufC and SufD. The interaction with SufE is required to mediate the direct transfer of the sulfur atom from the S-sulfanylcysteine. Requires pyridoxal 5'-phosphate as cofactor.

It localises to the cytoplasm. The enzyme catalyses (sulfur carrier)-H + L-cysteine = (sulfur carrier)-SH + L-alanine. The catalysed reaction is L-selenocysteine + AH2 = hydrogenselenide + L-alanine + A + H(+). Its pathway is cofactor biosynthesis; iron-sulfur cluster biosynthesis. Cysteine desulfurases mobilize the sulfur from L-cysteine to yield L-alanine, an essential step in sulfur metabolism for biosynthesis of a variety of sulfur-containing biomolecules. Component of the suf operon, which is activated and required under specific conditions such as oxidative stress and iron limitation. Acts as a potent selenocysteine lyase in vitro, that mobilizes selenium from L-selenocysteine. Selenocysteine lyase activity is however unsure in vivo. The sequence is that of Cysteine desulfurase from Shigella sonnei (strain Ss046).